Here is a 307-residue protein sequence, read N- to C-terminus: MTWKTQLPPVRGKLLVDEALAPFTWFRVGGPADVVFLPADEQDLADFLKALDPAVPVLAIGVGSNLLVRDGGVEGVVIRLGKGFNTVEALGDNRIKAGSAVPDAILARKAAEAGIAGLEFYAGIPGTVGGATIMNAGCYGSETANILISARVMDRRGQVRELTAAELHFTYRHSALQDAGLIVLDAVFEGLADDPAAIKARMAEITSRRETTQPIREKTGGSTFKNPPGHSSWKLVDEAGWRGKRFSASGKEGGGAMFSPLHSNFLINTGEATAADLEGLGDTVRADVLAKTGVQLDWEIKRIGRPA.

The region spanning 27–193 (RVGGPADVVF…LDAVFEGLAD (167 aa)) is the FAD-binding PCMH-type domain. Arginine 172 is an active-site residue. The active-site Proton donor is serine 222. The active site involves glutamate 299.

It belongs to the MurB family. FAD serves as cofactor.

It localises to the cytoplasm. The enzyme catalyses UDP-N-acetyl-alpha-D-muramate + NADP(+) = UDP-N-acetyl-3-O-(1-carboxyvinyl)-alpha-D-glucosamine + NADPH + H(+). It participates in cell wall biogenesis; peptidoglycan biosynthesis. Functionally, cell wall formation. This chain is UDP-N-acetylenolpyruvoylglucosamine reductase, found in Caulobacter sp. (strain K31).